The primary structure comprises 377 residues: Chaperone protein DnaJ (377 aa).

Positions 5-70 (DYYEVLGVGK…EKKAAYDQYG (66 aa)) constitute a J domain. The segment at 137–215 (GHEAQIRVPH…CHGQGKLKSQ (79 aa)) adopts a CR-type zinc-finger fold. Zn(2+) contacts are provided by Cys-150, Cys-153, Cys-167, Cys-170, Cys-189, Cys-192, Cys-203, and Cys-206. CXXCXGXG motif repeat units lie at residues 150–157 (CDHCHGNG), 167–174 (CPTCHGAG), 189–196 (CPKCHGSG), and 203–210 (CTKCHGQG).

It belongs to the DnaJ family. As to quaternary structure, homodimer. Zn(2+) is required as a cofactor.

It localises to the cytoplasm. Participates actively in the response to hyperosmotic and heat shock by preventing the aggregation of stress-denatured proteins and by disaggregating proteins, also in an autonomous, DnaK-independent fashion. Unfolded proteins bind initially to DnaJ; upon interaction with the DnaJ-bound protein, DnaK hydrolyzes its bound ATP, resulting in the formation of a stable complex. GrpE releases ADP from DnaK; ATP binding to DnaK triggers the release of the substrate protein, thus completing the reaction cycle. Several rounds of ATP-dependent interactions between DnaJ, DnaK and GrpE are required for fully efficient folding. Also involved, together with DnaK and GrpE, in the DNA replication of plasmids through activation of initiation proteins. This Cupriavidus taiwanensis (strain DSM 17343 / BCRC 17206 / CCUG 44338 / CIP 107171 / LMG 19424 / R1) (Ralstonia taiwanensis (strain LMG 19424)) protein is Chaperone protein DnaJ.